A 668-amino-acid polypeptide reads, in one-letter code: CLK4-associating serine/arginine rich protein (668 aa).

Position 101 is a phosphoserine (S101). Disordered stretches follow at residues 173–232 and 252–668; these read AEVE…GMAD and AKAL…HYRH. Residues 182-214 are compositionally biased toward acidic residues; sequence PEEEESPAEEESNSDEDEVIPDIDVEVDVDELN. A compositionally biased stretch (basic residues) spans 265-283; that stretch reads RRSRRQRREFREKRLRGRK. A phosphoserine mark is found at S285 and S294. Residues 290–313 are compositionally biased toward basic and acidic residues; that stretch reads ARRDSPTYDPYKRSPSESSSESRS. T327 is subject to Phosphothreonine. Phosphoserine occurs at positions 331 and 335. Residues 340-353 show a composition bias toward low complexity; that stretch reads AAAAAAAAASGAAP. A compositionally biased stretch (pro residues) spans 354–365; that stretch reads GKPPAPPQPGGP. A compositionally biased stretch (low complexity) spans 378–395; sequence SSSSASRTSSSRSSSRSS. Residues 396–435 are compositionally biased toward basic residues; it reads SRSRRGYYRSGRHARSRSRSWSRSRSRSRRYSRSRSRGRR. Basic and acidic residues predominate over residues 436 to 446; the sequence is HSDGGSRDGHR. Residues 475 to 486 are compositionally biased toward basic residues; sequence RGARGPRHHSSS. Low complexity-rich tracts occupy residues 487–510 and 518–527; these read HSRSSWSLSPSRSRSLTRSGSRSQ and QSHSQSQSHS. Phosphoserine is present on S541. T567 is modified (phosphothreonine). Residues 579–641 adopt a coiled-coil conformation; the sequence is ALNRQFKADK…ERQYSRQSRS (63 aa). Basic and acidic residues-rich tracts occupy residues 584–611 and 619–635; these read FKADKKAAQEKMIQQEHERQEREDELRA and KERERREKEREEWERQY. Over residues 636–645 the composition is skewed to low complexity; the sequence is SRQSRSPSPR. The segment covering 653-668 has biased composition (basic residues); it reads SRRRSRSRSRSPHYRH.

Belongs to the splicing factor SR family. In terms of assembly, probably interacts with CLK4. In terms of processing, phosphorylated in vitro by CLK4.

It localises to the nucleus. Functionally, probably functions as an alternative splicing regulator. May regulate the mRNA splicing of genes such as CLK1. May act by regulating members of the CLK kinase family. This chain is CLK4-associating serine/arginine rich protein (Clasrp), found in Rattus norvegicus (Rat).